Reading from the N-terminus, the 81-residue chain is Photosystem I iron-sulfur center (81 aa).

4Fe-4S ferredoxin-type domains lie at 2 to 31 and 37 to 68; these read SHTVKIYDTCIGCTQCVRACPTDVLEMVPW and GQIASSPRVEDCVGCKRCETACPTDFLSVRVY. Residues cysteine 11, cysteine 14, cysteine 17, cysteine 21, cysteine 48, cysteine 51, cysteine 54, and cysteine 58 each coordinate [4Fe-4S] cluster.

In terms of assembly, the eukaryotic PSI reaction center is composed of at least 11 subunits. [4Fe-4S] cluster serves as cofactor.

The protein localises to the plastid. Its subcellular location is the chloroplast thylakoid membrane. The enzyme catalyses reduced [plastocyanin] + hnu + oxidized [2Fe-2S]-[ferredoxin] = oxidized [plastocyanin] + reduced [2Fe-2S]-[ferredoxin]. Its function is as follows. Apoprotein for the two 4Fe-4S centers FA and FB of photosystem I (PSI); essential for photochemical activity. FB is the terminal electron acceptor of PSI, donating electrons to ferredoxin. The C-terminus interacts with PsaA/B/D and helps assemble the protein into the PSI complex. Required for binding of PsaD and PsaE to PSI. PSI is a plastocyanin/cytochrome c6-ferredoxin oxidoreductase, converting photonic excitation into a charge separation, which transfers an electron from the donor P700 chlorophyll pair to the spectroscopically characterized acceptors A0, A1, FX, FA and FB in turn. This chain is Photosystem I iron-sulfur center, found in Thalassiosira pseudonana (Marine diatom).